A 128-amino-acid chain; its full sequence is Mediator of RNA polymerase II transcription subunit 31-A (128 aa).

Belongs to the Mediator complex subunit 31 family. In terms of assembly, component of the Mediator complex.

It localises to the nucleus. In terms of biological role, component of the Mediator complex, a coactivator involved in the regulated transcription of nearly all RNA polymerase II-dependent genes. Mediator functions as a bridge to convey information from gene-specific regulatory proteins to the basal RNA polymerase II transcription machinery. Mediator is recruited to promoters by direct interactions with regulatory proteins and serves as a scaffold for the assembly of a functional preinitiation complex with RNA polymerase II and the general transcription factors. This is Mediator of RNA polymerase II transcription subunit 31-A (med31-a) from Xenopus laevis (African clawed frog).